The following is a 198-amino-acid chain: Nucleoid occlusion factor SlmA (198 aa).

One can recognise an HTH tetR-type domain in the interval 9–70 (RNRREEILQA…SLIEFIEDSL (62 aa)). A DNA-binding region (H-T-H motif) is located at residues 33–52 (TTAKLAANVGVSEAALYRHF). Residues 119 to 144 (DRLQGRINQLFERIEVQLRQVLREKK) adopt a coiled-coil conformation.

The protein belongs to the nucleoid occlusion factor SlmA family. As to quaternary structure, homodimer. Interacts with FtsZ.

Its subcellular location is the cytoplasm. It is found in the nucleoid. In terms of biological role, required for nucleoid occlusion (NO) phenomenon, which prevents Z-ring formation and cell division over the nucleoid. Acts as a DNA-associated cell division inhibitor that binds simultaneously chromosomal DNA and FtsZ, and disrupts the assembly of FtsZ polymers. SlmA-DNA-binding sequences (SBS) are dispersed on non-Ter regions of the chromosome, preventing FtsZ polymerization at these regions. In Yersinia enterocolitica serotype O:8 / biotype 1B (strain NCTC 13174 / 8081), this protein is Nucleoid occlusion factor SlmA.